The following is a 305-amino-acid chain: LysM and putative peptidoglycan-binding domain-containing protein 3 (305 aa).

Residues 1–216 (MAGRNQNRTV…PYYGADWGIG (216 aa)) are Extracellular-facing. Residues Asn-7 and Asn-26 are each glycosylated (N-linked (GlcNAc...) asparagine). Phosphoserine is present on Ser-55. Residues 65–109 (LTKDIQEGDTLNAVALQYCCTVADIKRVNNLISDQDFFALRSIKI) form the LysM domain. Asn-199 carries an N-linked (GlcNAc...) asparagine glycan. The chain crosses the membrane as a helical span at residues 217-237 (WWTAVVIMLIVGIITPVFYLL). Residues 238 to 305 (YYEILAKVDV…PQAHDAQHKT (68 aa)) lie on the Cytoplasmic side of the membrane. Positions 253–305 (VGSSHLHPGLTPPTQHREMENEIGPTKGIPVGQQDDHKLYRQDPQAHDAQHKT) are disordered. Over residues 286 to 305 (QDDHKLYRQDPQAHDAQHKT) the composition is skewed to basic and acidic residues.

Its subcellular location is the cell membrane. It is found in the golgi apparatus. In terms of biological role, essential for Golgi structural integrity. This chain is LysM and putative peptidoglycan-binding domain-containing protein 3 (Lysmd3), found in Mus musculus (Mouse).